A 375-amino-acid chain; its full sequence is Succinyl-diaminopimelate desuccinylase (375 aa).

His-66 lines the Zn(2+) pocket. Asp-68 is an active-site residue. Asp-99 lines the Zn(2+) pocket. The active-site Proton acceptor is Glu-133. Glu-134, Glu-162, and His-348 together coordinate Zn(2+).

Belongs to the peptidase M20A family. DapE subfamily. As to quaternary structure, homodimer. The cofactor is Zn(2+). Requires Co(2+) as cofactor.

The catalysed reaction is N-succinyl-(2S,6S)-2,6-diaminopimelate + H2O = (2S,6S)-2,6-diaminopimelate + succinate. Its pathway is amino-acid biosynthesis; L-lysine biosynthesis via DAP pathway; LL-2,6-diaminopimelate from (S)-tetrahydrodipicolinate (succinylase route): step 3/3. In terms of biological role, catalyzes the hydrolysis of N-succinyl-L,L-diaminopimelic acid (SDAP), forming succinate and LL-2,6-diaminopimelate (DAP), an intermediate involved in the bacterial biosynthesis of lysine and meso-diaminopimelic acid, an essential component of bacterial cell walls. This is Succinyl-diaminopimelate desuccinylase from Stenotrophomonas maltophilia (strain R551-3).